A 130-amino-acid chain; its full sequence is Large ribosomal subunit protein bL31c (130 aa).

The transit peptide at 1-36 directs the protein to the chloroplast; it reads MVLTLSNQFLAKIPATPKTLTLPKTSSSTLRPQWSC.

This sequence belongs to the bacterial ribosomal protein bL31 family. Type A subfamily. Component of the chloroplast large ribosomal subunit (LSU). Mature 70S chloroplast ribosomes of higher plants consist of a small (30S) and a large (50S) subunit. The 30S small subunit contains 1 molecule of ribosomal RNA (16S rRNA) and 24 different proteins. The 50S large subunit contains 3 rRNA molecules (23S, 5S and 4.5S rRNA) and 33 different proteins.

It is found in the plastid. The protein localises to the chloroplast. In terms of biological role, component of the chloroplast ribosome (chloro-ribosome), a dedicated translation machinery responsible for the synthesis of chloroplast genome-encoded proteins, including proteins of the transcription and translation machinery and components of the photosynthetic apparatus. This chain is Large ribosomal subunit protein bL31c (RPL31), found in Spinacia oleracea (Spinach).